The following is a 421-amino-acid chain: UDP-N-acetylglucosamine 1-carboxyvinyltransferase (421 aa).

Position 22 to 23 (22 to 23) interacts with phosphoenolpyruvate; the sequence is KN. A UDP-N-acetyl-alpha-D-glucosamine-binding site is contributed by Arg-93. Cys-117 acts as the Proton donor in catalysis. Cys-117 carries the 2-(S-cysteinyl)pyruvic acid O-phosphothioketal modification. UDP-N-acetyl-alpha-D-glucosamine contacts are provided by residues 122–126, Asp-308, and Val-330; that span reads RPVDL.

This sequence belongs to the EPSP synthase family. MurA subfamily.

Its subcellular location is the cytoplasm. The enzyme catalyses phosphoenolpyruvate + UDP-N-acetyl-alpha-D-glucosamine = UDP-N-acetyl-3-O-(1-carboxyvinyl)-alpha-D-glucosamine + phosphate. Its pathway is cell wall biogenesis; peptidoglycan biosynthesis. Functionally, cell wall formation. Adds enolpyruvyl to UDP-N-acetylglucosamine. In Stutzerimonas stutzeri (strain A1501) (Pseudomonas stutzeri), this protein is UDP-N-acetylglucosamine 1-carboxyvinyltransferase.